Here is a 183-residue protein sequence, read N- to C-terminus: uncharacterized protein (183 aa).

An N-terminal signal peptide occupies residues 1–23; that stretch reads MSAFKKSLLVAGVAMILSNNVFA. C41 and C80 form a disulfide bridge.

Belongs to the fimbrial protein family.

The protein resides in the fimbrium. This is an uncharacterized protein from Escherichia coli (strain K12).